An 838-amino-acid polypeptide reads, in one-letter code: MLETVKLVTKRDGSVEPYDEKVVRSRIVNLMSGIDSYYVDVDDLVRVVGEGVREGMSTSMLDELLAETAAYCVTKHPDYGLLAGRLAVTALHKTTTESVLDSFRVLHEHVSQATKRHAPLISEELWDIANKHSAALQQIINYERDFDFEYFGYKTLERSYLLRVHKGRGVMEVVERPQQMFLRVALGIHGEDLERVKETYDYMSQGFFTHATPTLFNAGTPFPQMSSCFLVAMREDSIDGIYDTLKQCAIISKSAGGIGIHMHNIRAAGSYIAGTNGTSNGLVPMLRVWNNTARYVDQGGGKRKGAFAIYLEPWHADIFGFLLLKKNTGKEDQRARDLFYGLWIPDLFMERVESHGTWTLMDPNTAPFLSDCYGQEFTDLYERYEREGRGVRTIQAQELWFLILESQVETGVPFMLYKDACNFKSNQKNLGTIKCSNLCTEIVEYTSRDEVAVCNLASIALPRFVKDGAFDYVALKEVTKVVTRNLNRVIDRNHYPVCEARYSNLRHRPVGIGVQGLADAFALLSLPFAHPEAKKLNRQIFETIYIAAVEASTELAEKDGPYETFKGSPASEGKLQFDLWDEERRIRGMNEDSVHSHCGLWDWDSLKERVVKVGMRNSLLIAPMPTASTSQILGNNECIEPFTSNIYVRRVLSGEFPVVNKHLVKELIRLRLWNDDMRRKIIALNGSVSGIKEIPERIRELYKVVWEIRQKDLIDMAADRGRYIDQSQSLNLFLATPTSSQLTSMHFYSWKKGLKTGMYYLRSQPAADAIKFTLDPKAMKELPKPDKQSKEEVHGSVGRGKRKRVGEKPTANHSNAGAPNLNGPPDTDGDGGCLNCGS.

The 92-residue stretch at 6–97 (KLVTKRDGSV…VTALHKTTTE (92 aa)) folds into the ATP-cone domain. ATP-binding positions include 10 to 11 (KR), 16 to 22 (EPYDEKV), threonine 58, and aspartate 62. Serine 227 is a binding site for GDP. A disulfide bridge connects residues cysteine 228 and cysteine 454. DTTP is bound by residues 236-238 (DSI), lysine 253, arginine 266, and 273-274 (AG). Asparagine 437 lines the GDP pocket. The active-site Proton acceptor is the asparagine 437. Cysteine 439 serves as the catalytic Cysteine radical intermediate. Residues glutamate 441 and 626–629 (TAST) contribute to the GDP site. Glutamate 441 acts as the Proton acceptor in catalysis. The span at 780-794 (KELPKPDKQSKEEVH) shows a compositional bias: basic and acidic residues. Positions 780–838 (KELPKPDKQSKEEVHGSVGRGKRKRVGEKPTANHSNAGAPNLNGPPDTDGDGGCLNCGS) are disordered.

It belongs to the ribonucleoside diphosphate reductase large chain family. In terms of assembly, heterodimer of a large and a small subunit.

The enzyme catalyses a 2'-deoxyribonucleoside 5'-diphosphate + [thioredoxin]-disulfide + H2O = a ribonucleoside 5'-diphosphate + [thioredoxin]-dithiol. The catalysed reaction is dCDP + [thioredoxin]-disulfide + H2O = CDP + [thioredoxin]-dithiol. Its activity is regulated as follows. Under complex allosteric control mediated by deoxynucleoside triphosphates and ATP binding to separate specificity and activation sites on the large subunit. The type of nucleotide bound at the specificity site determines substrate preference. It seems probable that ATP makes the enzyme reduce CDP and UDP, dGTP favors ADP reduction and dTTP favors GDP reduction. Stimulated by ATP and inhibited by dATP binding to the activity site. Its function is as follows. Provides the precursors necessary for DNA synthesis. Catalyzes the rate limiting step in the de novo synthesis of deoxyribonucleotides by directly reducing ribonucleotides to the corresponding deoxyribonucleotides. This Trypanosoma brucei brucei protein is Ribonucleoside-diphosphate reductase large subunit (RNR1).